We begin with the raw amino-acid sequence, 89 residues long: MEIRDKKAKYLEEKGFYRRAADRWAEIMVLLSSDAERKLAAQKRAFCINKSLRNNLQADNYSDIKQGVYKAYKKMGLVNEKIFRNYKEN.

In terms of biological role, transcriptional activator of eaeA/bfpA expression in enteropathogenic E.coli. The sequence is that of Protein PerC (perC) from Escherichia coli O111:H-.